A 199-amino-acid polypeptide reads, in one-letter code: NAD(P)H dehydrogenase (quinone) (199 aa).

Residues 4–190 form the Flavodoxin-like domain; it reads ILVLYYSTYG…DGARFQGRHV (187 aa). FMN-binding positions include 10-15 and 78-80; these read STYGHI and TRF. Tyr-12 is an NAD(+) binding site. Trp-98 is a substrate binding site. FMN contacts are provided by residues 113-119 and His-134; that span reads STATQHG.

It belongs to the WrbA family. FMN is required as a cofactor.

The catalysed reaction is a quinone + NADH + H(+) = a quinol + NAD(+). The enzyme catalyses a quinone + NADPH + H(+) = a quinol + NADP(+). The polypeptide is NAD(P)H dehydrogenase (quinone) (Rhizorhabdus wittichii (strain DSM 6014 / CCUG 31198 / JCM 15750 / NBRC 105917 / EY 4224 / RW1) (Sphingomonas wittichii)).